The following is a 31-amino-acid chain: U14-ctenitoxin-Co1c (31 aa).

In terms of tissue distribution, expressed by the venom gland.

Its subcellular location is the secreted. Functionally, not toxic to mice by intracerebroventricular injection. The chain is U14-ctenitoxin-Co1c from Ctenus ornatus (Brazilian spider).